A 706-amino-acid polypeptide reads, in one-letter code: K(+)-insensitive pyrophosphate-energized proton pump (706 aa).

Transmembrane regions (helical) follow at residues 1 to 21 (MTAL…AIWA), 62 to 82 (VVIF…GFAI), 83 to 103 (GAIL…RANV), 129 to 149 (LLVA…LIHF), and 164 to 184 (VALG…GGIF). Lys186 provides a ligand contact to substrate. The Mg(2+) site is built by Asp189, Asp193, Asn216, and Asp219. A run of 6 helical transmembrane segments spans residues 231–251 (LFET…IFFG), 263–283 (TLPL…TFFV), 300–320 (IATG…LIGF), 330–350 (GLAL…IIWI), 393–413 (IVII…GIAI), and 414–434 (ATTT…FGPV). Mg(2+) is bound at residue Asp436. 4 consecutive transmembrane segments (helical) span residues 467-487 (AVTK…LFAA), 516-536 (YVVV…AMGM), 585-605 (IIPS…IYAI), and 616-636 (AFSA…FVAI). Positions 646, 672, and 676 each coordinate Ca(2+). Lys679 contacts substrate. Residues 685–705 (AVNPMIKITNIVALLLLAILA) traverse the membrane as a helical segment.

Belongs to the H(+)-translocating pyrophosphatase (TC 3.A.10) family. K(+)-insensitive subfamily. As to quaternary structure, homodimer. Mg(2+) serves as cofactor.

It localises to the cell inner membrane. It carries out the reaction diphosphate + H2O + H(+)(in) = 2 phosphate + 2 H(+)(out). Functionally, proton pump that utilizes the energy of pyrophosphate hydrolysis as the driving force for proton movement across the membrane. Generates a proton motive force. In Rhodopseudomonas palustris (strain ATCC BAA-98 / CGA009), this protein is K(+)-insensitive pyrophosphate-energized proton pump.